Consider the following 376-residue polypeptide: uncharacterized protein (376 aa).

The first 31 residues, 1–31, serve as a signal peptide directing secretion; sequence MSRHKVYKAISSYVIIAIIIIAIVAVVGVLL. Residues 37-57 form a disordered region; the sequence is SSSSVTSTTTPTTSSSVSPSS.

The protein belongs to the bacterial solute-binding protein 1 family. WtpA subfamily.

This is an uncharacterized protein from Sulfurisphaera tokodaii (strain DSM 16993 / JCM 10545 / NBRC 100140 / 7) (Sulfolobus tokodaii).